Reading from the N-terminus, the 208-residue chain is Protein Nef (208 aa).

The N-myristoyl glycine; by host moiety is linked to residue Gly-2. Ser-6 bears the Phosphoserine; by host mark. A disordered region spans residues 16–51 (IRERMRRTPPTPPAAEGVGAVSQDLERRGAITSSNT). Positions 65–68 (EEDE) are acidic; interacts with host PACS1 and PACS2; stabilizes the interaction of NEF/MHC-I with host AP1M1; necessary for MHC-I internalization. The segment at 72-81 (PVRPQVPLRP) is SH3-binding; interaction with Src family tyrosine kinases. Positions 75-78 (PQVP) match the PxxP; stabilizes the interaction of NEF/MHC-I with host AP1M1; necessary for MHC-I internalization motif. The segment at 111-127 (EILDLWVYHTQGYFPDW) is mediates dimerization, Nef-PTE1 interaction. The tract at residues 151 to 183 (VDPEEVEKANEGENNCLLHPMSQHGMEDEDKEV) is binding to ATP6V1H. Residues 167-168 (LL) carry the Dileucine internalization motif; necessary for CD4 internalization motif. A Diacidic; necessary for CD4 internalization motif is present at residues 177 to 178 (ED).

It belongs to the lentivirus primate group Nef protein family. As to quaternary structure, monomer; cytosolic form. Homodimer; membrane bound form. Interacts with Nef associated p21-activated kinase (PAK2); this interaction activates PAK2. Associates with the Nef-MHC-I-AP1 complex; this complex is required for MHC-I internalization. Interacts (via C-terminus) with host PI3-kinase. Interacts with host PACS1; this interaction seems to be weak. Interacts with host PACS2. Interacts with host LCK and MAPK3; these interactions inhibit the kinase activity of the latter. Interacts with host ATP6V1H; this interaction may play a role in CD4 endocytosis. Associates with the CD4-Nef-AP2 complex; this complex is required for CD4 internalization. Interacts with host AP2 subunit alpha and AP2 subunit sigma2. Interacts with TCR-zeta chain; this interaction up-regulates the Fas ligand (FasL) surface expression. Interacts with host HCK, LYN, and SRC; these interactions activate the Src family kinases. Interacts with MAP3K5; this interaction inhibits the Fas and TNFR-mediated death signals. Interacts with beta-COP and PTE1. Interacts with human RACK1; this increases Nef phosphorylation by PKC. Interacts with TP53; this interaction decreases the half-life of TP53, protecting the infected cell against p53-mediated apoptosis. In terms of processing, the virion-associated Nef proteins are cleaved by the viral protease to release the soluble C-terminal core protein. Nef is probably cleaved concomitantly with viral structural proteins on maturation of virus particles. Myristoylated. Post-translationally, phosphorylated on serine residues, probably by host PKCdelta and theta.

It is found in the host cell membrane. It localises to the virion. Its subcellular location is the secreted. The protein localises to the host Golgi apparatus membrane. Functionally, factor of infectivity and pathogenicity, required for optimal virus replication. Alters numerous pathways of T-lymphocyte function and down-regulates immunity surface molecules in order to evade host defense and increase viral infectivity. Alters the functionality of other immunity cells, like dendritic cells, monocytes/macrophages and NK cells. In terms of biological role, in infected CD4(+) T-lymphocytes, down-regulates the surface MHC-I, mature MHC-II, CD4, CD28, CCR5 and CXCR4 molecules. Mediates internalization and degradation of host CD4 through the interaction of with the cytoplasmic tail of CD4, the recruitment of AP-2 (clathrin adapter protein complex 2), internalization through clathrin coated pits, and subsequent transport to endosomes and lysosomes for degradation. Diverts host MHC-I molecules to the trans-Golgi network-associated endosomal compartments by an endocytic pathway to finally target them for degradation. MHC-I down-regulation may involve AP-1 (clathrin adapter protein complex 1) or possibly Src family kinase-ZAP70/Syk-PI3K cascade recruited by PACS2. In consequence infected cells are masked for immune recognition by cytotoxic T-lymphocytes. Decreasing the number of immune receptors also prevents reinfection by more HIV particles (superinfection). Down-regulates host SERINC3 and SERINC5 thereby excluding these proteins from the viral particles. Virion infectivity is drastically higher when SERINC3 or SERINC5 are excluded from the viral envelope, because these host antiviral proteins impair the membrane fusion event necessary for subsequent virion penetration. Bypasses host T-cell signaling by inducing a transcriptional program nearly identical to that of anti-CD3 cell activation. Interaction with TCR-zeta chain up-regulates the Fas ligand (FasL). Increasing surface FasL molecules and decreasing surface MHC-I molecules on infected CD4(+) cells send attacking cytotoxic CD8+ T-lymphocytes into apoptosis. Its function is as follows. Plays a role in optimizing the host cell environment for viral replication without causing cell death by apoptosis. Protects the infected cells from apoptosis in order to keep them alive until the next virus generation is ready to strike. Inhibits the Fas and TNFR-mediated death signals by blocking MAP3K5/ASK1. Decreases the half-life of TP53, protecting the infected cell against p53-mediated apoptosis. Inhibits the apoptotic signals regulated by the Bcl-2 family proteins through the formation of a Nef/PI3-kinase/PAK2 complex that leads to activation of PAK2 and induces phosphorylation of host BAD. Functionally, extracellular Nef protein targets CD4(+) T-lymphocytes for apoptosis by interacting with CXCR4 surface receptors. The sequence is that of Protein Nef from Human immunodeficiency virus type 1 group M subtype F1 (isolate 93BR020) (HIV-1).